Consider the following 1661-residue polypeptide: Beta/gamma crystallin domain-containing protein 2 (1661 aa).

8 disordered regions span residues 72 to 135 (EEET…PPCV), 148 to 168 (PGPR…SSRS), 242 to 268 (VPAG…GLGS), 297 to 321 (PASA…GRAP), 337 to 380 (STEL…THPG), 411 to 757 (EHVT…EEDE), 808 to 871 (LGPW…VSCS), and 883 to 903 (TKGP…PTSR). Positions 105–118 (PKEKRPEGRLKEAV) are enriched in basic and acidic residues. Over residues 337 to 353 (STELPLQTSQGQASVPS) the composition is skewed to polar residues. Over residues 431-442 (PSPGGLSAPSSP) the composition is skewed to low complexity. Polar residues-rich tracts occupy residues 507–519 (SSPT…QGSS), 628–644 (PKST…SSIQ), and 685–697 (SEGS…TQKE). Positions 706–719 (PAPSSSVDRVSPSP) are enriched in low complexity. Residues 731 to 750 (EASTESQLVSDPTEGKTCTE) are compositionally biased toward polar residues. Positions 825-835 (EKEEEEEEEPE) are enriched in acidic residues. Positions 841–851 (DDEKLQRRQEK) are enriched in basic and acidic residues. Beta/gamma crystallin 'Greek key' domains are found at residues 986–1023 (GKVI…RVVR), 1024–1067 (GCWV…RRVV), 1073–1113 (PEIS…TVSA), 1114–1156 (GLWL…KPMR), 1168–1213 (PRAV…RVLG), 1214–1256 (GCWV…RVIR), 1262–1302 (PAVV…HVLS), 1303–1345 (GVWV…QPVL), 1356–1393 (SKIQ…RVHG), 1394–1437 (GSWI…QKVS), 1443–1483 (PSIF…RIKG), and 1484–1525 (GIWV…YPIK). A Ricin B-type lectin domain is found at 1569-1659 (WYYEDGLLKN…DRASQIWTIH (91 aa)).

Belongs to the beta/gamma-crystallin family.

The protein is Beta/gamma crystallin domain-containing protein 2 of Homo sapiens (Human).